A 669-amino-acid chain; its full sequence is Elongation factor G 2 (669 aa).

In terms of domain architecture, tr-type G spans 1 to 276 (MGIRNIGIMA…SIVDYLPSPF (276 aa)). Residues 10 to 17 (AHIDAGKT), 74 to 78 (DTPGH), and 128 to 131 (NKMD) each bind GTP.

Belongs to the TRAFAC class translation factor GTPase superfamily. Classic translation factor GTPase family. EF-G/EF-2 subfamily.

It localises to the cytoplasm. Catalyzes the GTP-dependent ribosomal translocation step during translation elongation. During this step, the ribosome changes from the pre-translocational (PRE) to the post-translocational (POST) state as the newly formed A-site-bound peptidyl-tRNA and P-site-bound deacylated tRNA move to the P and E sites, respectively. Catalyzes the coordinated movement of the two tRNA molecules, the mRNA and conformational changes in the ribosome. The chain is Elongation factor G 2 (fusA2) from Borreliella afzelii (strain PKo) (Borrelia afzelii).